Here is a 485-residue protein sequence, read N- to C-terminus: Sulfate adenylyltransferase subunit 1 (485 aa).

The region spanning 30-243 (KGLLRFLTCG…ELLETIDTQR (214 aa)) is the tr-type G domain. Residues 39–46 (GSVDDGKS) form a G1 region. 39–46 (GSVDDGKS) is a binding site for GTP. The G2 stretch occupies residues 97–101 (GITID). The interval 118–121 (DTPG) is G3. Residues 118-122 (DTPGH) and 173-176 (NKMD) contribute to the GTP site. The G4 stretch occupies residues 173–176 (NKMD). A G5 region spans residues 210-212 (SAL).

It belongs to the TRAFAC class translation factor GTPase superfamily. Classic translation factor GTPase family. CysN/NodQ subfamily. As to quaternary structure, heterodimer composed of CysD, the smaller subunit, and CysN.

The catalysed reaction is sulfate + ATP + H(+) = adenosine 5'-phosphosulfate + diphosphate. The protein operates within sulfur metabolism; hydrogen sulfide biosynthesis; sulfite from sulfate: step 1/3. Functionally, with CysD forms the ATP sulfurylase (ATPS) that catalyzes the adenylation of sulfate producing adenosine 5'-phosphosulfate (APS) and diphosphate, the first enzymatic step in sulfur assimilation pathway. APS synthesis involves the formation of a high-energy phosphoric-sulfuric acid anhydride bond driven by GTP hydrolysis by CysN coupled to ATP hydrolysis by CysD. The protein is Sulfate adenylyltransferase subunit 1 of Shewanella oneidensis (strain ATCC 700550 / JCM 31522 / CIP 106686 / LMG 19005 / NCIMB 14063 / MR-1).